The primary structure comprises 144 residues: Ribosomal RNA large subunit methyltransferase H (144 aa).

Residues leucine 63, glycine 92, and 111–116 (LSAMTL) contribute to the S-adenosyl-L-methionine site.

Belongs to the RNA methyltransferase RlmH family. In terms of assembly, homodimer.

The protein resides in the cytoplasm. The catalysed reaction is pseudouridine(1915) in 23S rRNA + S-adenosyl-L-methionine = N(3)-methylpseudouridine(1915) in 23S rRNA + S-adenosyl-L-homocysteine + H(+). In terms of biological role, specifically methylates the pseudouridine at position 1915 (m3Psi1915) in 23S rRNA. The sequence is that of Ribosomal RNA large subunit methyltransferase H from Prochlorococcus marinus (strain MIT 9313).